A 397-amino-acid polypeptide reads, in one-letter code: Pectate lyase (397 aa).

The signal sequence occupies residues 1-25 (MDVYRIRISVFFLLVLLTFAALTTA). An N-linked (GlcNAc...) asparagine glycan is attached at N134. Ca(2+) contacts are provided by D191, D216, and D220. N-linked (GlcNAc...) asparagine glycosylation occurs at N227. R272 is an active-site residue.

It belongs to the polysaccharide lyase 1 family. Ca(2+) is required as a cofactor.

The catalysed reaction is Eliminative cleavage of (1-&gt;4)-alpha-D-galacturonan to give oligosaccharides with 4-deoxy-alpha-D-galact-4-enuronosyl groups at their non-reducing ends.. The protein operates within glycan metabolism; pectin degradation; 2-dehydro-3-deoxy-D-gluconate from pectin: step 2/5. This is Pectate lyase from Nicotiana tabacum (Common tobacco).